The sequence spans 447 residues: Rab GDP dissociation inhibitor alpha (447 aa).

S427 bears the Phosphoserine mark.

Belongs to the Rab GDI family. As to quaternary structure, interacts with RHOH. Interacts with the non-phosphorylated forms of RAB1A, RAB3A, RAB5A, RAB5B, RAB5C, RAB8A, RAB8B, RAB12, RAB35, and RAB43. Interacts with RAB10. As to expression, high expression in brain, lower in other tissues.

It is found in the cytoplasm. Its subcellular location is the golgi apparatus. The protein localises to the trans-Golgi network. Functionally, regulates the GDP/GTP exchange reaction of most Rab proteins by inhibiting the dissociation of GDP from them, and the subsequent binding of GTP to them. Promotes the dissociation of GDP-bound Rab proteins from the membrane and inhibits their activation. Promotes the dissociation of RAB1A, RAB3A, RAB5A and RAB10 from membranes. The polypeptide is Rab GDP dissociation inhibitor alpha (Gdi1) (Mus musculus (Mouse)).